Reading from the N-terminus, the 237-residue chain is Thiamine-phosphate synthase (237 aa).

4-amino-2-methyl-5-(diphosphooxymethyl)pyrimidine contacts are provided by residues 41-45 and Asn73; that span reads QLRDK. Mg(2+) contacts are provided by Asp74 and Asp93. Ser112 contacts 4-amino-2-methyl-5-(diphosphooxymethyl)pyrimidine. 143–145 lines the 2-[(2R,5Z)-2-carboxy-4-methylthiazol-5(2H)-ylidene]ethyl phosphate pocket; sequence TPT. Position 146 (Lys146) interacts with 4-amino-2-methyl-5-(diphosphooxymethyl)pyrimidine. Gly192 contributes to the 2-[(2R,5Z)-2-carboxy-4-methylthiazol-5(2H)-ylidene]ethyl phosphate binding site.

The protein belongs to the thiamine-phosphate synthase family. Mg(2+) is required as a cofactor.

It carries out the reaction 2-[(2R,5Z)-2-carboxy-4-methylthiazol-5(2H)-ylidene]ethyl phosphate + 4-amino-2-methyl-5-(diphosphooxymethyl)pyrimidine + 2 H(+) = thiamine phosphate + CO2 + diphosphate. The catalysed reaction is 2-(2-carboxy-4-methylthiazol-5-yl)ethyl phosphate + 4-amino-2-methyl-5-(diphosphooxymethyl)pyrimidine + 2 H(+) = thiamine phosphate + CO2 + diphosphate. It catalyses the reaction 4-methyl-5-(2-phosphooxyethyl)-thiazole + 4-amino-2-methyl-5-(diphosphooxymethyl)pyrimidine + H(+) = thiamine phosphate + diphosphate. It participates in cofactor biosynthesis; thiamine diphosphate biosynthesis; thiamine phosphate from 4-amino-2-methyl-5-diphosphomethylpyrimidine and 4-methyl-5-(2-phosphoethyl)-thiazole: step 1/1. Its function is as follows. Condenses 4-methyl-5-(beta-hydroxyethyl)thiazole monophosphate (THZ-P) and 2-methyl-4-amino-5-hydroxymethyl pyrimidine pyrophosphate (HMP-PP) to form thiamine monophosphate (TMP). This Arthrobacter sp. (strain FB24) protein is Thiamine-phosphate synthase.